Consider the following 601-residue polypeptide: Terpinolene synthase, chloroplastic (601 aa).

A chloroplast-targeting transit peptide spans 1–32 (MSTFVISNSMHVGISFSFLHKLPQTPPPQVVC). Positions 354, 358, 498, 502, and 506 each coordinate Mg(2+). The short motif at 354 to 358 (DDVYD) is the DDXXD motif element.

It belongs to the terpene synthase family. Tpsd subfamily. It depends on Mg(2+) as a cofactor. Mn(2+) is required as a cofactor.

It is found in the plastid. It localises to the chloroplast. The catalysed reaction is (2E)-geranyl diphosphate = terpinolene + diphosphate. The protein operates within secondary metabolite biosynthesis; terpenoid biosynthesis. In terms of biological role, monoterpene synthase that catalyzes the formation of terpinolene and other monoterpenes from geranyl diphosphate. The polypeptide is Terpinolene synthase, chloroplastic (TES) (Ocimum basilicum (Sweet basil)).